Here is a 778-residue protein sequence, read N- to C-terminus: Serine/threonine-protein kinase BRSK1 (778 aa).

Residues 1-12 (MSSGAKEGGGGS) show a composition bias toward gly residues. Residues 1-29 (MSSGAKEGGGGSPAYHLPHPHPHPPQHAQ) are disordered. The region spanning 34 to 285 (YRLEKTLGKG…LEQIQKHPWY (252 aa)) is the Protein kinase domain. ATP-binding positions include 40–48 (LGKGQTGLV) and lysine 63. Aspartate 156 acts as the Proton acceptor in catalysis. Threonine 189 carries the phosphothreonine; by LKB1 modification. The 43-residue stretch at 314-356 (ELDPDVLESMASLGCFRDRERLHRELRSEEENQEKMIYYLLLD) folds into the UBA domain. A compositionally biased stretch (basic and acidic residues) spans 362–383 (PSCEDQDLPPRNDVDPPRKRVD). The disordered stretch occupies residues 362–548 (PSCEDQDLPP…SPGGGVGGAA (187 aa)). A phosphoserine mark is found at serine 399, serine 443, serine 447, and serine 450. Low complexity predominate over residues 430–457 (SRSVSGASTGLSSSPLSSPRSPVFSFSP). An omega-N-methylarginine mark is found at arginine 466, arginine 481, arginine 484, and arginine 498. Residues 491–508 (QPPPPSARSTPLPGPPGS) are compositionally biased toward pro residues. Serine 508 carries the phosphoserine modification. Positions 509–533 (PRSSGGTPLHSPLHTPRASPTGTPG) are enriched in low complexity. Arginine 525 carries the omega-N-methylarginine modification. Phosphothreonine is present on residues threonine 529 and threonine 535. Arginine 550 carries the post-translational modification Omega-N-methylarginine. Threonine 583 is subject to Phosphothreonine. Phosphoserine is present on residues serine 586, serine 587, and serine 601. Positions 719 to 778 (QPSVQALADEKNGAQTRPAGAPPRSLQPPPGRPDPELSSSPRRGPPKDKKLLATNGTPLP) are disordered.

The protein belongs to the protein kinase superfamily. CAMK Ser/Thr protein kinase family. SNF1 subfamily. Requires Mg(2+) as cofactor. In terms of processing, phosphorylated at Thr-189 by STK11/LKB1 in complex with STE20-related adapter-alpha (STRADA) pseudo kinase and CAB39. Not phosphorylated at Thr-189 by CaMKK2. In contrast, it is phosphorylated and activated by CaMKK1. May be inactivated via dephosphorylation of Thr-189 by PP2C. As to expression, widely expressed, with highest levels in brain and testis. Protein levels remain constant throughout the cell cycle.

The protein resides in the cytoplasm. The protein localises to the nucleus. It is found in the cytoskeleton. Its subcellular location is the microtubule organizing center. It localises to the centrosome. The protein resides in the synapse. The protein localises to the presynaptic active zone. It is found in the cytoplasmic vesicle. Its subcellular location is the secretory vesicle. It localises to the synaptic vesicle. It carries out the reaction L-seryl-[protein] + ATP = O-phospho-L-seryl-[protein] + ADP + H(+). The enzyme catalyses L-threonyl-[protein] + ATP = O-phospho-L-threonyl-[protein] + ADP + H(+). The catalysed reaction is L-seryl-[tau protein] + ATP = O-phospho-L-seryl-[tau protein] + ADP + H(+). It catalyses the reaction L-threonyl-[tau protein] + ATP = O-phospho-L-threonyl-[tau protein] + ADP + H(+). Its activity is regulated as follows. Activated by phosphorylation on Thr-189 by STK11/LKB1. Serine/threonine-protein kinase that plays a key role in polarization of neurons and centrosome duplication. Phosphorylates CDC25B, CDC25C, MAPT/TAU, RIMS1, TUBG1, TUBG2 and WEE1. Following phosphorylation and activation by STK11/LKB1, acts as a key regulator of polarization of cortical neurons, probably by mediating phosphorylation of microtubule-associated proteins such as MAPT/TAU at 'Thr-529' and 'Ser-579'. Also regulates neuron polarization by mediating phosphorylation of WEE1 at 'Ser-642' in postmitotic neurons, leading to down-regulate WEE1 activity in polarized neurons. In neurons, localizes to synaptic vesicles and plays a role in neurotransmitter release, possibly by phosphorylating RIMS1. Also acts as a positive regulator of centrosome duplication by mediating phosphorylation of gamma-tubulin (TUBG1 and TUBG2) at 'Ser-131', leading to translocation of gamma-tubulin and its associated proteins to the centrosome. Involved in the UV-induced DNA damage checkpoint response, probably by inhibiting CDK1 activity through phosphorylation and activation of WEE1, and inhibition of CDC25B and CDC25C. This Homo sapiens (Human) protein is Serine/threonine-protein kinase BRSK1 (BRSK1).